Here is a 178-residue protein sequence, read N- to C-terminus: Large ribosomal subunit protein uL10 (178 aa).

It belongs to the universal ribosomal protein uL10 family. In terms of assembly, part of the ribosomal stalk of the 50S ribosomal subunit. The N-terminus interacts with L11 and the large rRNA to form the base of the stalk. The C-terminus forms an elongated spine to which L12 dimers bind in a sequential fashion forming a multimeric L10(L12)X complex.

Its function is as follows. Forms part of the ribosomal stalk, playing a central role in the interaction of the ribosome with GTP-bound translation factors. This is Large ribosomal subunit protein uL10 from Leuconostoc mesenteroides subsp. mesenteroides (strain ATCC 8293 / DSM 20343 / BCRC 11652 / CCM 1803 / JCM 6124 / NCDO 523 / NBRC 100496 / NCIMB 8023 / NCTC 12954 / NRRL B-1118 / 37Y).